The sequence spans 233 residues: Orotidine 5'-phosphate decarboxylase (233 aa).

Substrate is bound by residues Asp10, Lys32, 59 to 68 (DLKFHDIPNT), Thr119, Arg180, Gln189, Gly209, and Arg210. Lys61 acts as the Proton donor in catalysis.

The protein belongs to the OMP decarboxylase family. Type 1 subfamily. In terms of assembly, homodimer.

The catalysed reaction is orotidine 5'-phosphate + H(+) = UMP + CO2. It functions in the pathway pyrimidine metabolism; UMP biosynthesis via de novo pathway; UMP from orotate: step 2/2. Its function is as follows. Catalyzes the decarboxylation of orotidine 5'-monophosphate (OMP) to uridine 5'-monophosphate (UMP). The polypeptide is Orotidine 5'-phosphate decarboxylase (Pasteurella multocida (strain Pm70)).